A 226-amino-acid chain; its full sequence is Enolase-phosphatase E1 (226 aa).

It belongs to the HAD-like hydrolase superfamily. MasA/MtnC family. Monomer. The cofactor is Mg(2+).

The enzyme catalyses 5-methylsulfanyl-2,3-dioxopentyl phosphate + H2O = 1,2-dihydroxy-5-(methylsulfanyl)pent-1-en-3-one + phosphate. Its pathway is amino-acid biosynthesis; L-methionine biosynthesis via salvage pathway; L-methionine from S-methyl-5-thio-alpha-D-ribose 1-phosphate: step 3/6. It functions in the pathway amino-acid biosynthesis; L-methionine biosynthesis via salvage pathway; L-methionine from S-methyl-5-thio-alpha-D-ribose 1-phosphate: step 4/6. Bifunctional enzyme that catalyzes the enolization of 2,3-diketo-5-methylthiopentyl-1-phosphate (DK-MTP-1-P) into the intermediate 2-hydroxy-3-keto-5-methylthiopentenyl-1-phosphate (HK-MTPenyl-1-P), which is then dephosphorylated to form the acireductone 1,2-dihydroxy-3-keto-5-methylthiopentene (DHK-MTPene). The protein is Enolase-phosphatase E1 of Alcanivorax borkumensis (strain ATCC 700651 / DSM 11573 / NCIMB 13689 / SK2).